A 476-amino-acid chain; its full sequence is Doublesex and mab-3 related transcription factor 3 (476 aa).

Residues 29–76 (CARCRNHGVLSWLKGHKRYCRFKDCTCEKCILIIERQRVMAAQVALRR) constitute a DNA-binding region (DM). 2 disordered regions span residues 89-130 (DSLR…RPAT) and 147-195 (GTLP…SKNC). Residues 102–121 (DAAATAATASQSSPASQASQ) show a composition bias toward low complexity. Positions 176 to 185 (FSDKDTDQRS) are enriched in basic and acidic residues. Residues 255-290 (RPPLEVLKKIFPNQKPTVLELILKGCGGDLVSAVEV) form the DMA domain. Over residues 418–432 (NSTSVFRSSPVLSSR) the composition is skewed to polar residues. A disordered region spans residues 418-476 (NSTSVFRSSPVLSSRTTEDPRISIPDDGCPIVAKQSIYTEDDYDERSDSSDSRILNTSS).

Belongs to the DMRT family.

Its subcellular location is the nucleus. In terms of biological role, probable transcription factor that plays a role in configuring the spinal circuits controlling stride in vertebrates. Involved in neuronal specification within a specific subdivision of spinal cord neurons and in the development of a coordinated locomotor network controlling limb movements. May regulate transcription during sexual development. The chain is Doublesex and mab-3 related transcription factor 3 (Dmrt3) from Rattus norvegicus (Rat).